Consider the following 492-residue polypeptide: Glycogen synthase 1 (492 aa).

Residue Lys15 participates in ADP-alpha-D-glucose binding.

Belongs to the glycosyltransferase 1 family. Bacterial/plant glycogen synthase subfamily.

The catalysed reaction is [(1-&gt;4)-alpha-D-glucosyl](n) + ADP-alpha-D-glucose = [(1-&gt;4)-alpha-D-glucosyl](n+1) + ADP + H(+). It functions in the pathway glycan biosynthesis; glycogen biosynthesis. Its function is as follows. Synthesizes alpha-1,4-glucan chains using ADP-glucose. In Trichormus variabilis (strain ATCC 29413 / PCC 7937) (Anabaena variabilis), this protein is Glycogen synthase 1.